A 39-amino-acid chain; its full sequence is Omega-theraphotoxin-Bs1b (39 aa).

Disulfide bonds link Cys4/Cys25, Cys8/Cys31, and Cys17/Cys36.

This sequence belongs to the neurotoxin 12 (Hwtx-2) family. 06 (TXP1) subfamily. In terms of tissue distribution, expressed by the venom gland.

It localises to the secreted. Inhibits voltage-gated calcium channels (Cav) in rat cerebellar granule cells. Has insecticidal activity. This Brachypelma smithi (Mexican red knee tarantula) protein is Omega-theraphotoxin-Bs1b.